Here is a 182-residue protein sequence, read N- to C-terminus: MSEPIQNENVESNVADAADIAAATAATEEFTNTIGDAISTSTEEETFEAAPAVLDGPIWTVGRRKRAIVRVRMVAGSGEITCNGRTLEDYFPNKLHQQLIKAPLVLLGREGQFDIHANLGGGGPTGQAGAFRLAIARALNAYNPAERPTLKKAGFLTRDARAVERKKAGLHKARRAPQYSKR.

Belongs to the universal ribosomal protein uS9 family.

The polypeptide is Small ribosomal subunit protein uS9 (Corynebacterium efficiens (strain DSM 44549 / YS-314 / AJ 12310 / JCM 11189 / NBRC 100395)).